Reading from the N-terminus, the 304-residue chain is 33 kDa chaperonin (304 aa).

Disulfide bonds link Cys245–Cys247 and Cys278–Cys281.

The protein belongs to the HSP33 family. Under oxidizing conditions two disulfide bonds are formed involving the reactive cysteines. Under reducing conditions zinc is bound to the reactive cysteines and the protein is inactive.

It localises to the cytoplasm. Its function is as follows. Redox regulated molecular chaperone. Protects both thermally unfolding and oxidatively damaged proteins from irreversible aggregation. Plays an important role in the bacterial defense system toward oxidative stress. This Microcystis aeruginosa (strain NIES-843 / IAM M-2473) protein is 33 kDa chaperonin.